A 103-amino-acid polypeptide reads, in one-letter code: Large ribosomal subunit protein bL21 (103 aa).

Belongs to the bacterial ribosomal protein bL21 family. Part of the 50S ribosomal subunit. Contacts protein L20.

In terms of biological role, this protein binds to 23S rRNA in the presence of protein L20. The chain is Large ribosomal subunit protein bL21 from Desulfitobacterium hafniense (strain DSM 10664 / DCB-2).